Consider the following 57-residue polypeptide: Weak toxin CM-1b (57 aa).

4 cysteine pairs are disulfide-bonded: C3/C19, C12/C37, C40/C49, and C50/C55.

Belongs to the three-finger toxin family. Short-chain subfamily. Orphan group XX sub-subfamily. Expressed by the venom gland.

It localises to the secreted. This is Weak toxin CM-1b from Hemachatus haemachatus (Rinkhals).